The primary structure comprises 91 residues: MEAPLVKCLDEILDSGAVGVICADKDGLALHSAGQVQLRAAGVITALASLAKQIDPSCDTTPTIHLESDSLDVYIQQKEQVSLAVYSTPKK.

This sequence belongs to the LAMTOR5 family. In terms of assembly, part of the Ragulator complex.

Its subcellular location is the cytoplasm. The protein resides in the lysosome. Its function is as follows. Regulator of the TOR pathway, a signaling cascade that promotes cell growth in response to growth factors, energy levels, and amino acids. As part of the Ragulator complex, may activate the TOR signaling cascade in response to amino acids. This Ixodes scapularis (Black-legged tick) protein is Ragulator complex protein LAMTOR5 homolog.